Here is a 210-residue protein sequence, read N- to C-terminus: Orotate phosphoribosyltransferase (210 aa).

5-phospho-alpha-D-ribose 1-diphosphate is bound by residues Arg94, Lys98, His100, and Glu120–Ser128. Ser124 provides a ligand contact to orotate.

It belongs to the purine/pyrimidine phosphoribosyltransferase family. PyrE subfamily. As to quaternary structure, homodimer. Requires Mg(2+) as cofactor.

It carries out the reaction orotidine 5'-phosphate + diphosphate = orotate + 5-phospho-alpha-D-ribose 1-diphosphate. The protein operates within pyrimidine metabolism; UMP biosynthesis via de novo pathway; UMP from orotate: step 1/2. Catalyzes the transfer of a ribosyl phosphate group from 5-phosphoribose 1-diphosphate to orotate, leading to the formation of orotidine monophosphate (OMP). This is Orotate phosphoribosyltransferase from Halalkalibacterium halodurans (strain ATCC BAA-125 / DSM 18197 / FERM 7344 / JCM 9153 / C-125) (Bacillus halodurans).